The chain runs to 432 residues: uncharacterized protein (432 aa).

The next 13 helical transmembrane spans lie at 7 to 27, 29 to 49, 68 to 88, 124 to 144, 156 to 176, 196 to 216, 241 to 261, 266 to 286, 291 to 311, 326 to 346, 358 to 378, 379 to 399, and 412 to 432; these read FIGL…PDIY, GIVI…PLPV, EALT…FMLA, FLSM…IALG, FLLL…IIGS, VGFP…YIYF, LVIF…SEIF, FDSV…LVEV, KIDW…GVIV, ILGN…TIIL, IIVP…LILA, VGMS…NAIV, and IGMI…ILYL.

This sequence belongs to the CitM (TC 2.A.11) transporter family.

The protein resides in the cell membrane. This is an uncharacterized protein from Methanocaldococcus jannaschii (strain ATCC 43067 / DSM 2661 / JAL-1 / JCM 10045 / NBRC 100440) (Methanococcus jannaschii).